The primary structure comprises 481 residues: Cis-aconitate decarboxylase (481 aa).

The segment at 462–481 is disordered; it reads SPPEVASNSPACNNSITNLS. The span at 467–481 shows a compositional bias: polar residues; it reads ASNSPACNNSITNLS.

The protein belongs to the PrpD family. As to quaternary structure, homodimer. Expressed in LPS-tolerized macrophages (at protein level). Expressed in peripheral blood mononuclear cells (PBMCs), microglia and macrophage cells.

The protein localises to the mitochondrion. It carries out the reaction cis-aconitate + H(+) = itaconate + CO2. In terms of biological role, cis-aconitate decarboxylase that catalyzes production of itaconate and is involved in the inhibition of the inflammatory response. Acts as a negative regulator of the Toll-like receptors (TLRs)-mediated inflammatory innate response by stimulating the tumor necrosis factor alpha-induced protein TNFAIP3 expression via reactive oxygen species (ROS) in LPS-tolerized macrophages. Involved in antimicrobial response of innate immune cells; ACOD1-mediated itaconic acid production contributes to the antimicrobial activity of macrophages by generating itaconate, leading to alkylation of proteins, such as TFEB. Involved in antiviral response following infection by flavivirus in neurons: ACOD1-mediated itaconate production inhibits the activity of succinate dehydrogenase, generating a metabolic state in neurons that suppresses replication of viral genomes. Plays a role in the embryo implantation. The polypeptide is Cis-aconitate decarboxylase (Homo sapiens (Human)).